The chain runs to 224 residues: Phosphoglycolate phosphatase (224 aa).

Asp8 serves as the catalytic Nucleophile. Mg(2+)-binding residues include Asp8, Asp10, Gly11, and Gly43. Lys151 is a binding site for substrate. The Mg(2+) site is built by Asp174, Ser175, and Asp178.

This sequence belongs to the HAD-like hydrolase superfamily. Archaeal SPP-like hydrolase family. In terms of assembly, homodimer. The cofactor is Mg(2+).

The catalysed reaction is 2-phosphoglycolate + H2O = glycolate + phosphate. Inhibited by Ca(2+) ions and by high chloride ion concentration. By contrast, low chloride concentration (up to 50 mM) slightly activate the enzyme. Catalyzes the dephosphorylation of 2-phosphoglycolate. Also has significant, but less efficient, pyrophosphatase activity, since it is able to catalyze the release of phosphate from inorganic pyrophosphate (PPi). This chain is Phosphoglycolate phosphatase, found in Thermoplasma acidophilum (strain ATCC 25905 / DSM 1728 / JCM 9062 / NBRC 15155 / AMRC-C165).